Consider the following 360-residue polypeptide: Phosphoserine aminotransferase (360 aa).

Arginine 41 provides a ligand contact to L-glutamate. Pyridoxal 5'-phosphate-binding residues include tryptophan 101, threonine 152, aspartate 172, and glutamine 195. Position 196 is an N6-(pyridoxal phosphate)lysine (lysine 196). Pyridoxal 5'-phosphate is bound at residue 237-238 (NT).

This sequence belongs to the class-V pyridoxal-phosphate-dependent aminotransferase family. SerC subfamily. Homodimer. Pyridoxal 5'-phosphate serves as cofactor.

It localises to the cytoplasm. The catalysed reaction is O-phospho-L-serine + 2-oxoglutarate = 3-phosphooxypyruvate + L-glutamate. It carries out the reaction 4-(phosphooxy)-L-threonine + 2-oxoglutarate = (R)-3-hydroxy-2-oxo-4-phosphooxybutanoate + L-glutamate. It functions in the pathway amino-acid biosynthesis; L-serine biosynthesis; L-serine from 3-phospho-D-glycerate: step 2/3. It participates in cofactor biosynthesis; pyridoxine 5'-phosphate biosynthesis; pyridoxine 5'-phosphate from D-erythrose 4-phosphate: step 3/5. Functionally, catalyzes the reversible conversion of 3-phosphohydroxypyruvate to phosphoserine and of 3-hydroxy-2-oxo-4-phosphonooxybutanoate to phosphohydroxythreonine. The protein is Phosphoserine aminotransferase of Burkholderia ambifaria (strain ATCC BAA-244 / DSM 16087 / CCUG 44356 / LMG 19182 / AMMD) (Burkholderia cepacia (strain AMMD)).